The primary structure comprises 396 residues: Diphosphomevalonate decarboxylase (396 aa).

(R)-5-diphosphomevalonate contacts are provided by residues 19-22, R74, 153-158, and T209; these read YWGK and SGSACR.

The protein belongs to the diphosphomevalonate decarboxylase family. In terms of assembly, homodimer.

It carries out the reaction (R)-5-diphosphomevalonate + ATP = isopentenyl diphosphate + ADP + phosphate + CO2. Its pathway is isoprenoid biosynthesis; isopentenyl diphosphate biosynthesis via mevalonate pathway; isopentenyl diphosphate from (R)-mevalonate: step 3/3. Functionally, diphosphomevalonate decarboxylase; part of the second module of ergosterol biosynthesis pathway that includes the middle steps of the pathway. MVD1/ERG19 converts diphosphomevalonate into isopentenyl diphosphate. The second module is carried out in the vacuole and involves the formation of farnesyl diphosphate, which is also an important intermediate in the biosynthesis of ubiquinone, dolichol, heme and prenylated proteins. Activity by the mevalonate kinase ERG12 first converts mevalonate into 5-phosphomevalonate. 5-phosphomevalonate is then further converted to 5-diphosphomevalonate by the phosphomevalonate kinase ERG8. The diphosphomevalonate decarboxylase MVD1/ERG19 then produces isopentenyl diphosphate. The isopentenyl-diphosphate delta-isomerase IDI1 then catalyzes the 1,3-allylic rearrangement of the homoallylic substrate isopentenyl (IPP) to its highly electrophilic allylic isomer, dimethylallyl diphosphate (DMAPP). Finally the farnesyl diphosphate synthase ERG20 catalyzes the sequential condensation of isopentenyl pyrophosphate with dimethylallyl pyrophosphate, and then with the resultant geranylpyrophosphate to the ultimate product farnesyl pyrophosphate. This chain is Diphosphomevalonate decarboxylase, found in Saccharomyces cerevisiae (strain ATCC 204508 / S288c) (Baker's yeast).